The primary structure comprises 107 residues: U1-lycotoxin-Ls1g (107 aa).

The signal sequence occupies residues 1–20; sequence MMKVLVVVALLVTLISYSSS. A propeptide spanning residues 21-41 is cleaved from the precursor; it reads EGIDDLEADELLSLMANEQTR. 3 disulfides stabilise this stretch: C51-C68, C58-C86, and C70-C84.

It belongs to the neurotoxin 19 (CSTX) family. 04 (U1-Lctx) subfamily. As to expression, expressed by the venom gland.

It localises to the secreted. This is U1-lycotoxin-Ls1g from Lycosa singoriensis (Wolf spider).